Here is a 100-residue protein sequence, read N- to C-terminus: uncharacterized protein (100 aa).

Residues 78–100 are disordered; the sequence is KPYRTESGTSSSNRMMLPPRQHV.

This is an uncharacterized protein from Caenorhabditis elegans.